The sequence spans 454 residues: Notoamide biosynthesis cluster protein M' (454 aa).

2 N-linked (GlcNAc...) asparagine glycosylation sites follow: Asn-51 and Asn-74. Over residues 205–219 (KARSKEKKPKRKKSK) the composition is skewed to basic residues. The interval 205-224 (KARSKEKKPKRKKSKAEKEH) is disordered. A run of 2 helical transmembrane segments spans residues 334–354 (MTTV…SGLF) and 375–395 (FWMY…VWGV).

Its subcellular location is the membrane. Its function is as follows. Part of the gene cluster that mediates the biosynthesis of notoamide, a fungal indole alkaloid that belongs to a family of natural products containing a characteristic bicyclo[2.2.2]diazaoctane core. The first step of notoamide biosynthesis involves coupling of L-proline and L-tryptophan by the bimodular NRPS notE', to produce cyclo-L-tryptophan-L-proline called brevianamide F. The reverse prenyltransferase notF' then acts as a deoxybrevianamide E synthase and converts brevianamide F to deoxybrevianamide E via reverse prenylation at C-2 of the indole ring leading to the bicyclo[2.2.2]diazaoctane core. Deoxybrevianamide E is further hydroxylated at C-6 of the indole ring, likely catalyzed by the cytochrome P450 monooxygenase notG', to yield 6-hydroxy-deoxybrevianamide E. 6-hydroxy-deoxybrevianamide E is a specific substrate of the prenyltransferase notC' for normal prenylation at C-7 to produce 6-hydroxy-7-prenyl-deoxybrevianamide, also called notoamide S. As the proposed pivotal branching point in notoamide biosynthesis, notoamide S can be diverted to notoamide E through an oxidative pyran ring closure putatively catalyzed by either notH' cytochrome P450 monooxygenase or the notD' FAD-linked oxidoreductase. This step would be followed by an indole 2,3-epoxidation-initiated pinacol-like rearrangement catalyzed by the notB' FAD-dependent monooxygenase leading to the formation of notoamide C and notoamide D. On the other hand notoamide S is converted to notoamide T by notH' (or notD'), a bifunctional oxidase that also functions as the intramolecular Diels-Alderase responsible for generation of (-)-notoamide T. To generate antipodal (+)-notoaminide T, notH (or notD) in Aspergillus strain MF297-2 is expected to catalyze a Diels-Alder reaction leading to the opposite stereochemistry. The remaining oxidoreductase notD' (or notH') likely catalyzes the oxidative pyran ring formation to yield (-)-stephacidin A. The FAD-dependent monooxygenase notI' is highly similar to notB' and is predicted to catalyze a similar conversion from (-)-stephacidin A to (+)-notoamide B via the 2,3-epoxidation of (-)-stephacidin A followed by a pinacol-type rearrangement. Finally, it remains unclear which enzyme could be responsible for the final hydroxylation steps leading to notoamide A and sclerotiamide. The function of notM' in the notoamide biosynthesis has not been determined yet. This is Notoamide biosynthesis cluster protein M' from Aspergillus versicolor.